The chain runs to 551 residues: MELPAVGEHVFAVESIEKKRIRKGRVEYLVKWRGWSPKYNTWEPEENILDPRLLIAFQNRERQEQLMGYRKRGPKPKPLVVQVPTFARRSNVLTGLQDSSADNRAKLELGTQGKGQGHQYELNSKKHHQYQPHSKERSGKPPPPGKSGKYYYQLNSKKHHPYQPDPKMYDLQYQGGHKEAPSPTCPDLGTKSHPPDKWAHGAAAKGYLGAVKPLGGGAGAPGKGSEKGPPNGMTPAPKEAVTGNGIGGKMKIVKNKNKNGRIVIVMSKYMENGMQAVKIKSGEAAEGEARSPSHKKRAAEERHPQGDRTFKKAAGASEEKKAEVPCKRREEEALVSGDAQPQDLGSRKLSPTKEAFGEQPLQLTTKPDLLAWDPARSSHPPAHHHHHHHHHHHHHTVGLNLSHARKRCLSETHGEREPCKKRLTARSISTPTCLGGSPVSEHPANVSPTAASLPQPEVILLDSDLDEPIDLRCVKMRSDAGEPPSTLQVKPEAPAVAAVVAPAPASEKPPAEAQEEPVEPLSEFKPFFGNIIITDVTANCLTVTFKEYVTV.

In terms of domain architecture, Chromo spans 11-69 (FAVESIEKKRIRKGRVEYLVKWRGWSPKYNTWEPEENILDPRLLIAFQNRERQEQLMGY). Residues K77, K106, K114, and K125 each participate in a glycyl lysine isopeptide (Lys-Gly) (interchain with G-Cter in SUMO2) cross-link. A disordered region spans residues 125–152 (KKHHQYQPHSKERSGKPPPPGKSGKYYY). Residue K149 is modified to N6-acetyllysine; alternate. A Glycyl lysine isopeptide (Lys-Gly) (interchain with G-Cter in SUMO2); alternate cross-link involves residue K149. Residues K157, K167, and K178 each participate in a glycyl lysine isopeptide (Lys-Gly) (interchain with G-Cter in SUMO2) cross-link. The segment at 172–193 (QYQGGHKEAPSPTCPDLGTKSH) is disordered. S182 carries the post-translational modification Phosphoserine. Glycyl lysine isopeptide (Lys-Gly) (interchain with G-Cter in SUMO2) cross-links involve residues K191, K205, K212, K223, K249, K268, K278, and K280. The tract at residues 216-244 (GGAGAPGKGSEKGPPNGMTPAPKEAVTGN) is disordered. Basic and acidic residues-rich tracts occupy residues 281–291 (SGEAAEGEARS), 298–310 (AAEE…DRTF), and 317–332 (SEEK…REEE). 2 disordered regions span residues 281–399 (SGEA…TVGL) and 430–451 (TPTC…PTAA). Glycyl lysine isopeptide (Lys-Gly) (interchain with G-Cter in SUMO2) cross-links involve residues K321, K353, and K366. Residues 381-396 (PAHHHHHHHHHHHHHT) are compositionally biased toward basic residues. Residue S463 is modified to Phosphoserine. K490 participates in a covalent cross-link: Glycyl lysine isopeptide (Lys-Gly) (interchain with G-Cter in SUMO2); alternate. K490 is covalently cross-linked (Glycyl lysine isopeptide (Lys-Gly) (interchain with G-Cter in SUMO); alternate).

As to quaternary structure, interacts with SUV39H1 and HIPK2. Interacts with CSNK2B. Component of a PRC1-like complex. The composition of the PRC1 complex differs between the PRC1 complex in pluripotent embryonic stem cells containing RNF2, CBX7 and PCGF2, and the PRC1 complex in differentiating cells containing RNF2, CBX2, CBX4 and BMI1. Interacts with RNF2. Interacts (via chromodomain) with histone H3K9Me3 and single-stranded RNA (ssRNA). Interacts with CHTOP. May interact with H3C15 and H3C1. Interacts with PRDM1. Ubiquitinated. Ubiquitination regulates the function of the Polycomb group (PcG) multiprotein PRC1-like complex. Deubiquitinated by USP26. Expressed in embryoid bodies.

The protein localises to the nucleus. It is found in the nucleus speckle. It functions in the pathway protein modification; protein sumoylation. Functionally, E3 SUMO-protein ligase that catalyzes sumoylation of target proteins by promoting the transfer of SUMO from the E2 enzyme to the substrate. Involved in the sumoylation of HNRNPK, a p53/TP53 transcriptional coactivator, hence indirectly regulates p53/TP53 transcriptional activation resulting in p21/CDKN1A expression. Its function is as follows. Component of a Polycomb group (PcG) multiprotein PRC1-like complex, a complex class required to maintain the transcriptionally repressive state of many genes, including Hox genes, throughout development. PcG PRC1 complex acts via chromatin remodeling and modification of histones; it mediates monoubiquitination of histone H2A 'Lys-119', rendering chromatin heritably changed in its expressibility. Binds to histone H3 trimethylated at 'Lys-9' (H3K9me3). Plays a role in the lineage differentiation of the germ layers in embryonic development. The polypeptide is E3 SUMO-protein ligase CBX4 (Cbx4) (Mus musculus (Mouse)).